A 489-amino-acid polypeptide reads, in one-letter code: MAKNVRVRYAPSPTGHLHIGGARTALFNYLFARHYGGKMVVRIEDTDIERNVEGGEESQLENLKWLGIDYDESIDKDGGYGPYRQTERLDIYRKYVNELLEQGHAYKCFCTPEELEREREEQRAAGIAAPQYSGKCRHLTPEQVAELEAQGKPYTIRLKVPEGKTYEVDDLVRGKVTFESKDIGDWVIVKANGIPTYNFAVVIDDHLMEISHVFRGEEHLSNTPKQLMVYEYFGWEPPQFAHMTLIVNEQRKKLSKRDESIIQFVSQYKELGYLPEAMFNFFALLGWSPEGEEEIFTKDELIRIFDVARLSKSPSMFDTKKLTWMNNQYIKKLDLDRLVELALPHLVKAGRLPADMSDEQRQWARDLIALYQEQMSYGAEIVSLSELFFKEEVEYEDEARQVLAEEQVPDVLSAFLANVRELEPFTADEIKAAIKAVQKSTGQKGKKLFMPIRAAVTGQTHGPELPFAIQLLGKQKVIERLERALHEKF.

Positions 11–21 (PSPTGHLHIGG) match the 'HIGH' region motif. 4 residues coordinate Zn(2+): Cys-108, Cys-110, Cys-136, and His-138. A 'KMSKS' region motif is present at residues 253 to 257 (KLSKR). An ATP-binding site is contributed by Lys-256.

The protein belongs to the class-I aminoacyl-tRNA synthetase family. Glutamate--tRNA ligase type 1 subfamily. As to quaternary structure, monomer. It depends on Zn(2+) as a cofactor.

The protein localises to the cytoplasm. It catalyses the reaction tRNA(Glu) + L-glutamate + ATP = L-glutamyl-tRNA(Glu) + AMP + diphosphate. Its function is as follows. Catalyzes the attachment of glutamate to tRNA(Glu) in a two-step reaction: glutamate is first activated by ATP to form Glu-AMP and then transferred to the acceptor end of tRNA(Glu). In Geobacillus thermodenitrificans (strain NG80-2), this protein is Glutamate--tRNA ligase.